The chain runs to 416 residues: Serine hydroxymethyltransferase (416 aa).

Residues Leu121 and 125–127 contribute to the (6S)-5,6,7,8-tetrahydrofolate site; that span reads GHL. The residue at position 230 (Lys230) is an N6-(pyridoxal phosphate)lysine.

The protein belongs to the SHMT family. In terms of assembly, homodimer. Pyridoxal 5'-phosphate is required as a cofactor.

It localises to the cytoplasm. The catalysed reaction is (6R)-5,10-methylene-5,6,7,8-tetrahydrofolate + glycine + H2O = (6S)-5,6,7,8-tetrahydrofolate + L-serine. Its pathway is one-carbon metabolism; tetrahydrofolate interconversion. The protein operates within amino-acid biosynthesis; glycine biosynthesis; glycine from L-serine: step 1/1. Functionally, catalyzes the reversible interconversion of serine and glycine with tetrahydrofolate (THF) serving as the one-carbon carrier. This reaction serves as the major source of one-carbon groups required for the biosynthesis of purines, thymidylate, methionine, and other important biomolecules. Also exhibits THF-independent aldolase activity toward beta-hydroxyamino acids, producing glycine and aldehydes, via a retro-aldol mechanism. The sequence is that of Serine hydroxymethyltransferase from Nitrosospira multiformis (strain ATCC 25196 / NCIMB 11849 / C 71).